A 201-amino-acid chain; its full sequence is 3-isopropylmalate dehydratase small subunit (201 aa).

It belongs to the LeuD family. LeuD type 1 subfamily. In terms of assembly, heterodimer of LeuC and LeuD.

It catalyses the reaction (2R,3S)-3-isopropylmalate = (2S)-2-isopropylmalate. It functions in the pathway amino-acid biosynthesis; L-leucine biosynthesis; L-leucine from 3-methyl-2-oxobutanoate: step 2/4. Functionally, catalyzes the isomerization between 2-isopropylmalate and 3-isopropylmalate, via the formation of 2-isopropylmaleate. The sequence is that of 3-isopropylmalate dehydratase small subunit from Azorhizobium caulinodans (strain ATCC 43989 / DSM 5975 / JCM 20966 / LMG 6465 / NBRC 14845 / NCIMB 13405 / ORS 571).